Here is a 283-residue protein sequence, read N- to C-terminus: NFU1 iron-sulfur cluster scaffold homolog, mitochondrial (283 aa).

The N-terminal 30 residues, 1–30 (MSKFLSQAALNTLRNTRLGSRQLVRSFAGI), are a transit peptide targeting the mitochondrion. Residues 182-250 (IKELLDTRIR…IPEVESVEQV (69 aa)) form a nifU region. Residues Cys-219 and Cys-222 each contribute to the [4Fe-4S] cluster site.

This sequence belongs to the NifU family.

It localises to the mitochondrion. Functionally, molecular scaffold for [Fe-S] cluster assembly of mitochondrial iron-sulfur proteins. This is NFU1 iron-sulfur cluster scaffold homolog, mitochondrial from Drosophila erecta (Fruit fly).